The chain runs to 860 residues: Ubiquitin fusion degradation protein 3 homolog (860 aa).

WD repeat units lie at residues 27 to 65 (AHKS…YTKT), 71 to 112 (PKGI…PYAI), 115 to 154 (EHKQ…SSSF), 163 to 203 (GHTL…SVFK), 204 to 242 (GHTD…ILRK), and 244 to 283 (ATQA…DGNL). A PFU domain is found at 397–497 (PIHYLEEITR…DKLSKGAASA (101 aa)). The disordered stretch occupies residues 494–585 (AASAQSGYED…LPQNKKKPRG (92 aa)). The 271-residue stretch at 586-856 (PLVPVPDFYI…KNIARDIVEM (271 aa)) folds into the PUL domain.

The protein belongs to the WD repeat PLAP family. Interacts with cdc-48.1. Expressed in intestine (at protein level).

It localises to the cytoplasm. Plays a role in protein ubiquitination, sorting and degradation through its association with cdc-48.1 and/or cdc-48.2. The sequence is that of Ubiquitin fusion degradation protein 3 homolog from Caenorhabditis elegans.